Here is a 203-residue protein sequence, read N- to C-terminus: Recombination protein RecR (203 aa).

The C4-type zinc-finger motif lies at 58–73; the sequence is CDYCGNLDIVSICNIC. The region spanning 81-177 is the Toprim domain; sequence STIAVVESVA…KISKLASGIP (97 aa).

This sequence belongs to the RecR family.

Functionally, may play a role in DNA repair. It seems to be involved in an RecBC-independent recombinational process of DNA repair. It may act with RecF and RecO. This Orientia tsutsugamushi (strain Ikeda) (Rickettsia tsutsugamushi) protein is Recombination protein RecR.